Consider the following 470-residue polypeptide: Iron-sulfur cluster assembly protein SufB (470 aa).

Belongs to the iron-sulfur cluster assembly SufBD family. In terms of assembly, component of a complex composed of SufB, SufC and SufD in a stoichiometric ratio of 1:2:1. Interacts with SufC. Interacts with SufD.

It functions in the pathway cofactor biosynthesis; iron-sulfur cluster biosynthesis. Participates in the sulfur mobilization (SUF) pathway for iron-sulfur (Fe-S) cluster biogenesis. As part of a complex consisting of SufB-SufC(2)-SufD, involved in assembly of [4Fe-4S] clusters. Exhibits ATPase activity. In Plasmodium falciparum (isolate 3D7), this protein is Iron-sulfur cluster assembly protein SufB.